Reading from the N-terminus, the 445-residue chain is GRAM domain-containing protein 2B (445 aa).

Position 1 is an N-acetylmethionine (M1). Positions 1–10 (MVKKPISSSD) are enriched in polar residues. Residues 1-119 (MVKKPISSSD…RKKSSSSSQY (119 aa)) form a disordered region. Positions 18-37 (PSSPKSSAGASHSSTDSPSS) are enriched in low complexity. Polar residues-rich tracts occupy residues 56–68 (KSPT…SSVE) and 82–93 (SKSSFDGSNLLS). The span at 94 to 112 (DKNDCKTESKADSKTERKK) shows a compositional bias: basic and acidic residues. The GRAM domain occupies 123–190 (MHFHKLFLDV…FSVTLIKKTK (68 aa)). Residues S238, S255, and S265 each carry the phosphoserine modification. Residues 277–331 (DLEGYSSSGSQTPESENSRDFHVTESQTVLNVTKGETKPPRTDAHGSRAPDGKAK) are disordered. Over residues 281 to 291 (YSSSGSQTPES) the composition is skewed to polar residues. The span at 311–330 (GETKPPRTDAHGSRAPDGKA) shows a compositional bias: basic and acidic residues.

This chain is GRAM domain-containing protein 2B (Gramd2b), found in Rattus norvegicus (Rat).